Here is a 63-residue protein sequence, read N- to C-terminus: Period circadian protein (63 aa).

Residues Glu1–Lys63 are disordered. 2 stretches are compositionally biased toward low complexity: residues Ser9–Thr31 and Ser39–Ala49. Residues Val54–Lys63 are compositionally biased toward polar residues.

In terms of assembly, forms a heterodimer with timeless (TIM); the complex then translocates into the nucleus. Phosphorylated with a circadian rhythmicity, probably by the double-time protein (dbt). Phosphorylation could be implicated in the stability of per monomer and in the formation of heterodimer per-tim.

It localises to the nucleus. The protein resides in the cytoplasm. The protein localises to the perinuclear region. Its function is as follows. Essential for biological clock functions. Determines the period length of circadian and ultradian rhythms; an increase in PER dosage leads to shortened circadian rhythms and a decrease leads to lengthened circadian rhythms. Essential for the circadian rhythmicity of locomotor activity, eclosion behavior, and for the rhythmic component of the male courtship song that originates in the thoracic nervous system. The biological cycle depends on the rhythmic formation and nuclear localization of the TIM-PER complex. Light induces the degradation of TIM, which promotes elimination of PER. Nuclear activity of the heterodimer coordinatively regulates PER and TIM transcription through a negative feedback loop. Behaves as a negative element in circadian transcriptional loop. Does not appear to bind DNA, suggesting indirect transcriptional inhibition. This is Period circadian protein (per) from Drosophila immigrans (Fruit fly).